Consider the following 215-residue polypeptide: UPF0056 membrane protein BU267 (215 aa).

The next 6 membrane-spanning stretches (helical) occupy residues 14 to 34 (FFIGLCALVNPIGMIPIFTTM), 56 to 76 (LILLISLFFGSNILNIFGISI), 81 to 101 (IAGGILIISIAFSMISGQFIK), 120 to 140 (VVPLAMPLIAGPGAISSTIVW), 150 to 170 (LFLCSLVIFLFSFVCWLCFEA), and 189 to 209 (IMGLLLMSLGIEFISTGIGAI).

It belongs to the UPF0056 (MarC) family.

It localises to the cell membrane. This Buchnera aphidicola subsp. Acyrthosiphon pisum (strain APS) (Acyrthosiphon pisum symbiotic bacterium) protein is UPF0056 membrane protein BU267.